The primary structure comprises 154 residues: 17 kDa surface antigen (154 aa).

The N-terminal stretch at 1–19 (MKLLSKIMIIALAASMLQA) is a signal peptide. C20 is lipidated: N-palmitoyl cysteine. A lipid anchor (S-diacylglycerol cysteine) is attached at C20.

It belongs to the rickettsiale 17 kDa surface antigen family.

It is found in the cell outer membrane. This chain is 17 kDa surface antigen (omp), found in Rickettsia montanensis.